A 212-amino-acid chain; its full sequence is Pyridoxine/pyridoxamine 5'-phosphate oxidase (212 aa).

Substrate-binding positions include arginine 8–tyrosine 11 and lysine 66. FMN is bound by residues arginine 61–lysine 66, phenylalanine 76–threonine 77, arginine 82, lysine 83, and glutamine 105. The substrate site is built by tyrosine 123, arginine 127, and serine 131. FMN-binding positions include glutamine 140–serine 141 and tryptophan 185. Arginine 191 to histidine 193 is a binding site for substrate. Arginine 195 is an FMN binding site.

The protein belongs to the pyridoxamine 5'-phosphate oxidase family. Homodimer. FMN is required as a cofactor.

It carries out the reaction pyridoxamine 5'-phosphate + O2 + H2O = pyridoxal 5'-phosphate + H2O2 + NH4(+). It catalyses the reaction pyridoxine 5'-phosphate + O2 = pyridoxal 5'-phosphate + H2O2. Its pathway is cofactor metabolism; pyridoxal 5'-phosphate salvage; pyridoxal 5'-phosphate from pyridoxamine 5'-phosphate: step 1/1. It functions in the pathway cofactor metabolism; pyridoxal 5'-phosphate salvage; pyridoxal 5'-phosphate from pyridoxine 5'-phosphate: step 1/1. Functionally, catalyzes the oxidation of either pyridoxine 5'-phosphate (PNP) or pyridoxamine 5'-phosphate (PMP) into pyridoxal 5'-phosphate (PLP). In Shewanella oneidensis (strain ATCC 700550 / JCM 31522 / CIP 106686 / LMG 19005 / NCIMB 14063 / MR-1), this protein is Pyridoxine/pyridoxamine 5'-phosphate oxidase.